The following is a 239-amino-acid chain: Putative HTH-type transcriptional regulator YkgA (239 aa).

In terms of domain architecture, HTH araC/xylS-type spans 19-117 (QQLLEWIECN…GCSPREYRHR (99 aa)). DNA-binding regions (H-T-H motif) lie at residues 36-57 (EDIA…RNFM) and 84-107 (MLDI…KKLF).

The polypeptide is Putative HTH-type transcriptional regulator YkgA (ykgA) (Escherichia coli (strain K12)).